The primary structure comprises 803 residues: Bromodomain-containing protein 2 (803 aa).

Position 1 is an N-acetylmethionine (Met-1). The disordered stretch occupies residues 1–28 (MLQNVTPHSKLPGEGNAGLLGLGPEAAA). Thr-6 bears the Phosphothreonine mark. Phosphoserine is present on Ser-37. The tract at residues 53–73 (ALQLTPANPPPPEVSNPKKPG) is disordered. The Bromo 1 domain maps to 74-180 (RVTNQLQYLH…KIFLQKVASM (107 aa)). Asp-112, Tyr-155, Asn-156, Lys-157, Asp-160, and Asp-161 together coordinate a protein. 3 disordered regions span residues 268–349 (PPAQ…LSEQ), 456–653 (EPLE…RQLS), and 739–803 (EKRL…SDSG). Low complexity predominate over residues 285–298 (TTTPTPTAILAPGS). Phosphoserine occurs at positions 298, 301, and 305. Residues 316–332 (MRRESGRPIKPPRKDLP) are compositionally biased toward basic and acidic residues. A Bromo 2 domain is found at 344-453 (GKLSEQLKHC…DVFEFRYAKM (110 aa)). Residues 481–515 (SSEESSSESSSEEDEEEDEEEEEEEEESESSDSEE) are compositionally biased toward acidic residues. Basic residues predominate over residues 545–567 (KPKRKREKKEKKKKRKAEKHRGR). The short motif at 556-560 (KKKRK) is the Nuclear localization signal element. The NET domain maps to 634-716 (DSEEEEESRP…SCLRKKPRKP (83 aa)). Ser-635 carries the post-translational modification Phosphoserine. Residues 641 to 652 (SRPMSYDEKRQL) show a composition bias toward basic and acidic residues. The span at 777–797 (SASSSSSDSSSSSSSSSSSDT) shows a compositional bias: low complexity.

Belongs to the BET family. In terms of assembly, homodimer. Interacts with E2F1. Interacts with (acetylated) STAT3; promoting STAT3 recruitment to chromatin. Interacts with CTCF; promoting BRD2 recruitment to chromatin.

The protein resides in the nucleus. The protein localises to the chromosome. Its function is as follows. Chromatin reader protein that specifically recognizes and binds histone H4 acetylated at 'Lys-5' and 'Lys-12' (H4K5ac and H4K12ac, respectively), thereby controlling gene expression and remodeling chromatin structures. Recruits transcription factors and coactivators to target gene sites, and activates RNA polymerase II machinery for transcriptional elongation. Plays a key role in genome compartmentalization via its association with CTCF and cohesin: recruited to chromatin by CTCF and promotes formation of topologically associating domains (TADs) via its ability to bind acetylated histones, contributing to CTCF boundary formation and enhancer insulation. Also recognizes and binds acetylated non-histone proteins, such as STAT3. Involved in inflammatory response by regulating differentiation of naive CD4(+) T-cells into T-helper Th17: recognizes and binds STAT3 acetylated at 'Lys-87', promoting STAT3 recruitment to chromatin. In addition to acetylated lysines, also recognizes and binds lysine residues on histones that are both methylated and acetylated on the same side chain to form N6-acetyl-N6-methyllysine (Kacme), an epigenetic mark of active chromatin associated with increased transcriptional initiation. Specifically binds histone H4 acetyl-methylated at 'Lys-5' and 'Lys-12' (H4K5acme and H4K12acme, respectively). In Canis lupus familiaris (Dog), this protein is Bromodomain-containing protein 2 (BRD2).